The chain runs to 474 residues: 1-aminocyclopropane-1-carboxylate synthase 4 (474 aa).

Substrate contacts are provided by glutamate 47 and tyrosine 85. Lysine 273 is subject to N6-(pyridoxal phosphate)lysine.

It belongs to the class-I pyridoxal-phosphate-dependent aminotransferase family. In terms of assembly, homodimer and heterodimer. In vivo, the relevance of heterodimerization with other ACS enzymes is however unsure. Interacts with XBAT32. Interacts (via its C-terminal region) with ETO1 and EOL1. The cofactor is pyridoxal 5'-phosphate. Post-translationally, ubiquitinated by XBAT32. Ubiquitination probably leads to its subsequent degradation, thus controlling ethylene production. As to expression, expressed in roots, leaves and flowers.

It catalyses the reaction S-adenosyl-L-methionine = 1-aminocyclopropane-1-carboxylate + S-methyl-5'-thioadenosine + H(+). The protein operates within alkene biosynthesis; ethylene biosynthesis via S-adenosyl-L-methionine; ethylene from S-adenosyl-L-methionine: step 1/2. Functionally, 1-aminocyclopropane-1-carboxylate synthase (ACS) enzymes catalyze the conversion of S-adenosyl-L-methionine (SAM) into 1-aminocyclopropane-1-carboxylate (ACC), a direct precursor of ethylene. The sequence is that of 1-aminocyclopropane-1-carboxylate synthase 4 (ACS4) from Arabidopsis thaliana (Mouse-ear cress).